The primary structure comprises 412 residues: Divalent metal cation transporter MntH (412 aa).

The next 11 helical transmembrane spans lie at 19–39, 46–66, 94–114, 122–142, 155–175, 196–216, 241–261, 290–310, 329–349, 350–370, and 389–409; these read FALMGPAFIAAIGYIDPGNFA, ASFGYKLLWVVVWANLMAMLI, VWFYWVQAEIIAMATDLAEFI, LILGVSLLQGAVLTGIATFLI, LVIGGLLLFVAAAYIVELVFS, AVFLAAGVLGATIMPHVIYLH, IAMTIAGFVNLAMMATAAAAF, IFGLSLVAAGLSSTVVGTLAG, SVTMMPSFIVILMGLDPTRIL, VMSQVLLSFGIALALVPLLIF, and IGWMIVVLVVALNLWLLIGTL.

This sequence belongs to the NRAMP family.

Its subcellular location is the cell inner membrane. Functionally, h(+)-stimulated, divalent metal cation uptake system. The chain is Divalent metal cation transporter MntH from Enterobacter sp. (strain 638).